Consider the following 370-residue polypeptide: Translocating chain-associated membrane protein 2 (370 aa).

Over 1–22 (MAFRRRTKSYPLFSQEFIIHNH) the chain is Cytoplasmic. Residues 23–43 (ADIGFCLVLCVLIGLMFEVTA) traverse the membrane as a helical segment. Residues 44–75 (KTAFLFILPQYNISVPTADSETVHYHYGPKDL) are Extracellular-facing. The N-linked (GlcNAc...) asparagine glycan is linked to asparagine 55. A helical transmembrane segment spans residues 76–96 (VTILFYVVITIIFHAVVQEYI). Residues 97–119 (LDKISKRLHLSKVKHSKFNESGQ) lie on the Cytoplasmic side of the membrane. The TLC domain maps to 112-321 (SKFNESGQLL…HSQLRHWREY (210 aa)). A helical transmembrane segment spans residues 120–140 (LLVFHLSAVAWCFYVIVTEGY). Topologically, residues 141-159 (LTNPRSLWEDYPHVYLSFQ) are extracellular. Residues 160 to 180 (VKFFYLGQLAYWLHSLPELYF) form a helical membrane-spanning segment. The Cytoplasmic portion of the chain corresponds to 181 to 191 (QKVRKEEVPRQ). Residues 192-209 (LQYICLYLLHITGAYLLN) form a helical membrane-spanning segment. At 210-214 (LSRLG) the chain is on the extracellular side. A helical membrane pass occupies residues 215-235 (LILLLLQYSTEALFHMARLFH). Topologically, residues 236–250 (FADENNERLFNAWAA) are cytoplasmic. A helical transmembrane segment spans residues 251–271 (VFGVTRLFILTLAVLTIGFGL). The Extracellular segment spans residues 272-287 (ARVENQVFDPEKGNFN). A helical membrane pass occupies residues 288–308 (TLPCRLGMLLLVCVAQAWLMW). The Cytoplasmic segment spans residues 309–370 (RFIHSQLRHW…SSRTKKLKSP (62 aa)). The disordered stretch occupies residues 332 to 370 (SAVPRPPAKLLKREPGYHENGVVKAENGTSSRTKKLKSP).

This sequence belongs to the TRAM family. As to quaternary structure, interacts with COL1A1. Interacts with SERCA2B.

It is found in the membrane. Necessary for collagen type I synthesis. May couple the activity of the ER Ca(2+) pump SERCA2B with the activity of the translocon. This coupling may increase the local Ca(2+) concentration at the site of collagen synthesis, and a high Ca(2+) concentration may be necessary for the function of molecular chaperones involved in collagen folding. Required for proper insertion of the first transmembrane helix N-terminus of TM4SF20 into the ER lumen, may act as a ceramide sensor for regulated alternative translocation (RAT). The sequence is that of Translocating chain-associated membrane protein 2 (Tram2) from Mus musculus (Mouse).